Here is a 90-residue protein sequence, read N- to C-terminus: DNA-binding protein HRm (90 aa).

Belongs to the bacterial histone-like protein family.

Histone-like DNA-binding protein which is capable of wrapping DNA to stabilize it, and thus to prevent its denaturation under extreme environmental conditions. The polypeptide is DNA-binding protein HRm (hupB) (Rhizobium meliloti (strain 1021) (Ensifer meliloti)).